The following is a 398-amino-acid chain: Alpha-2,8-sialyltransferase 8F (398 aa).

Topologically, residues 1-3 (MRP) are cytoplasmic. The helical; Signal-anchor for type II membrane protein transmembrane segment at 4–24 (GGALLALLASLLLLLLLRLLW) threads the bilayer. Residues 25–398 (CPADAPGRAR…KLQFSKCEVA (374 aa)) are Lumenal-facing. N-linked (GlcNAc...) asparagine glycosylation is found at Asn66, Asn93, Asn151, and Asn196. 2 cysteine pairs are disulfide-bonded: Cys186-Cys335 and Cys200-Cys395. Residues Asn214, 236–238 (NPS), and 322–324 (STG) contribute to the substrate site. The Proton donor/acceptor role is filled by His370.

Belongs to the glycosyltransferase 29 family.

Its subcellular location is the golgi apparatus membrane. It carries out the reaction a ganglioside GM3 + CMP-N-acetyl-beta-neuraminate = a ganglioside GD3 + CMP + H(+). It catalyses the reaction a ganglioside GM3 (d18:1(4E)) + CMP-N-acetyl-beta-neuraminate = a ganglioside GD3 (d18:1(4E)) + CMP + H(+). The catalysed reaction is a ganglioside GD1a (d18:1(4E)) + CMP-N-acetyl-beta-neuraminate = a ganglioside GT1a (d18:1(4E)) + CMP + H(+). The enzyme catalyses a ganglioside GD1a + CMP-N-acetyl-beta-neuraminate = a ganglioside GT1a + CMP + H(+). It carries out the reaction a ganglioside GM1b (d18:1(4E)) + CMP-N-acetyl-beta-neuraminate = a ganglioside GD1c (d18:1(4E)) + CMP + H(+). It catalyses the reaction a ganglioside GM1b + CMP-N-acetyl-beta-neuraminate = a ganglioside GD1c + CMP + H(+). The catalysed reaction is a ganglioside GM4 (d18:1(4E)) + CMP-N-acetyl-beta-neuraminate = an N-acetyl-alpha-neuraminosyl-(2-&gt;8)-N-acetyl-alpha-neuraminosyl-(2-&gt;3)-beta-D-galactosyl-(1&lt;-&gt;1')-N-acylsphing-4-enine + CMP + H(+). The enzyme catalyses N-acetyl-alpha-neuraminosyl-(2-&gt;3)-beta-D-galactosyl-(1&lt;-&gt;1')-ceramide + CMP-N-acetyl-beta-neuraminate = N-acetyl-alpha-neuraminosyl-(2-&gt;8)-N-acetyl-alpha-neuraminosyl-(2-&gt;3)-beta-D-galactosyl-(1&lt;-&gt;1')-ceramide + CMP + H(+). It carries out the reaction a ganglioside GT1b (d18:1(4E)) + CMP-N-acetyl-beta-neuraminate = a ganglioside GQ1b (d18:1(4E)) + CMP + H(+). It catalyses the reaction a ganglioside GT1b + CMP-N-acetyl-beta-neuraminate = a ganglioside GQ1b + CMP + H(+). It participates in protein modification; protein glycosylation. Functionally, alpha-2,8-sialyltransferase that prefers O-glycans to N-glycans or glycolipids as acceptor substrates. The minimal acceptor substrate is the NeuAc-alpha-2,3(6)-Gal sequence at the non-reducing end of their carbohydrate groups. This Homo sapiens (Human) protein is Alpha-2,8-sialyltransferase 8F.